The chain runs to 134 residues: Global transcriptional regulator Spx (134 aa).

Cys-10 and Cys-13 form a disulfide bridge.

Belongs to the ArsC family. Spx subfamily. In terms of assembly, interacts with the C-terminal domain of the alpha subunit of the RNAP.

The protein resides in the cytoplasm. Functionally, global transcriptional regulator that plays a key role in stress response and exerts either positive or negative regulation of genes. Acts by interacting with the C-terminal domain of the alpha subunit of the RNA polymerase (RNAP). This interaction can enhance binding of RNAP to the promoter region of target genes and stimulate their transcription, or block interaction of RNAP with activator. The polypeptide is Global transcriptional regulator Spx (Streptococcus pyogenes serotype M1).